The chain runs to 472 residues: ATP synthase subunit beta (472 aa).

Residue 149–156 (GGAGVGKT) coordinates ATP.

It belongs to the ATPase alpha/beta chains family. F-type ATPases have 2 components, CF(1) - the catalytic core - and CF(0) - the membrane proton channel. CF(1) has five subunits: alpha(3), beta(3), gamma(1), delta(1), epsilon(1). CF(0) has three main subunits: a(1), b(2) and c(9-12). The alpha and beta chains form an alternating ring which encloses part of the gamma chain. CF(1) is attached to CF(0) by a central stalk formed by the gamma and epsilon chains, while a peripheral stalk is formed by the delta and b chains.

The protein resides in the cell inner membrane. It carries out the reaction ATP + H2O + 4 H(+)(in) = ADP + phosphate + 5 H(+)(out). Produces ATP from ADP in the presence of a proton gradient across the membrane. The catalytic sites are hosted primarily by the beta subunits. In Pelagibacter ubique (strain HTCC1062), this protein is ATP synthase subunit beta.